The following is a 430-amino-acid chain: Aspartate aminotransferase, mitochondrial (430 aa).

Residues Met1–Ala29 constitute a mitochondrion transit peptide. The residue at position 48 (Thr48) is a Phosphothreonine. The residue at position 59 (Lys59) is an N6-acetyllysine. A substrate-binding site is contributed by Gly65. Lys73 carries the N6-acetyllysine; alternate modification. Lys73 bears the N6-succinyllysine; alternate mark. Residue Lys82 is modified to N6-acetyllysine. Lys90 is subject to N6-acetyllysine; alternate. Lys90 is subject to N6-succinyllysine; alternate. Tyr96 is modified (3'-nitrotyrosine; alternate). A Phosphotyrosine; alternate modification is found at Tyr96. An N6-acetyllysine; alternate mark is found at Lys107 and Lys122. Lys107 and Lys122 each carry N6-succinyllysine; alternate. Ser143 is modified (phosphoserine). Residue Lys159 is modified to N6-acetyllysine; alternate. Position 159 is an N6-succinyllysine; alternate (Lys159). Substrate is bound at residue Trp162. Lys185 bears the N6-acetyllysine; alternate mark. Lys185 carries the N6-succinyllysine; alternate modification. A substrate-binding site is contributed by Asn215. At Lys227 the chain carries N6-succinyllysine. Lys234 carries the post-translational modification N6-acetyllysine. N6-acetyllysine; alternate is present on residues Lys279 and Lys296. Lys279 carries the N6-(pyridoxal phosphate)lysine; alternate modification. Residue Lys296 is modified to N6-succinyllysine; alternate. Lys302 is subject to N6-acetyllysine. The residue at position 309 (Lys309) is an N6-acetyllysine; alternate. Lys309 bears the N6-succinyllysine; alternate mark. Residue Arg313 is modified to Asymmetric dimethylarginine. Lys338 bears the N6-acetyllysine; alternate mark. Lys338 carries the post-translational modification N6-succinyllysine; alternate. The residue at position 345 (Lys345) is an N6-acetyllysine. Lys363 carries the N6-acetyllysine; alternate modification. Lys363 is subject to N6-succinyllysine; alternate. An N6-acetyllysine mark is found at Lys364 and Lys387. An N6-acetyllysine; alternate mark is found at Lys396 and Lys404. An N6-succinyllysine; alternate mark is found at Lys396 and Lys404. Arg407 contributes to the substrate binding site.

Belongs to the class-I pyridoxal-phosphate-dependent aminotransferase family. As to quaternary structure, homodimer. Pyridoxal 5'-phosphate serves as cofactor.

It is found in the mitochondrion matrix. The protein localises to the cell membrane. The catalysed reaction is L-aspartate + 2-oxoglutarate = oxaloacetate + L-glutamate. It catalyses the reaction L-kynurenine + 2-oxoglutarate = 4-(2-aminophenyl)-2,4-dioxobutanoate + L-glutamate. Catalyzes the irreversible transamination of the L-tryptophan metabolite L-kynurenine to form kynurenic acid (KA). As a member of the malate-aspartate shuttle, it has a key role in the intracellular NAD(H) redox balance. Is important for metabolite exchange between mitochondria and cytosol, and for amino acid metabolism. Facilitates cellular uptake of long-chain free fatty acids. This chain is Aspartate aminotransferase, mitochondrial (GOT2), found in Bos taurus (Bovine).